Reading from the N-terminus, the 479-residue chain is POU domain, class 2, transcription factor 2 (479 aa).

5 disordered regions span residues 1-86 (MVHS…AQPH), 166-200 (TQAVTRPTLPDPHLSHPQPPKCLEPPSHPEEPSDL), 275-298 (SSLPSPNQLSSPSLGFDGLPGRRR), 357-393 (PCSAAPMLPSPGKPASYSPHMVTPQGGAGTLPLSQAS), and 409-479 (TLHP…PYQP). Basic and acidic residues predominate over residues 12–37 (RMSKPLEAEKQGLDSPSEHTDTERNG). Residues 38-60 (PDTNHQNPQNKTSPFSVSPTGPS) are compositionally biased toward polar residues. The segment covering 76–85 (APLPPQPAQP) has biased composition (pro residues). Positions 195 to 269 (EEPSDLEELE…LLEKWLNDAE (75 aa)) constitute a POU-specific domain. Over residues 275–288 (SSLPSPNQLSSPSL) the composition is skewed to low complexity. The homeobox DNA-binding region spans 297-356 (RRKKRTSIETNVRFALEKSFLANQKPTSEEILLIAEQLHMEKEVIRVWFCNRRQKEKRIN). Residues 389-410 (LSQASSSLSTTVTTLSSAVGTL) form a leucine-zipper region. Residues 416–425 (AGGGGGGGGA) show a composition bias toward gly residues.

This sequence belongs to the POU transcription factor family. Class-2 subfamily. As to quaternary structure, interacts with NR3C1, AR and PGR. Interacts with POU2AF1; the interaction increases POU2F2 transactivation activity. In terms of tissue distribution, isoform 3 is B-cell specific. Isoform 5 is expressed in B-cells and the immunoglobulin-expressing T-cell line MOLT-4, but not in the T-cell line BW5147.

The protein localises to the cytoplasm. It localises to the nucleus. Its activity is regulated as follows. Transactivation activity is enhanced by transcriptional coactivator POU2AF1. Functionally, transcription factor that specifically binds to the octamer motif (5'-ATTTGCAT-3'). Regulates IL6 expression in B cells with POU2AF1. Regulates transcription in a number of tissues in addition to activating immunoglobulin gene expression. Modulates transcription transactivation by NR3C1, AR and PGR. Its function is as follows. Activates the U2 small nuclear RNA (snRNA) promoter. The protein is POU domain, class 2, transcription factor 2 of Homo sapiens (Human).